A 229-amino-acid chain; its full sequence is MANPSQFGFQDASSPIMEELVEFHDHALMVALAICSLVLYLLALMLVEKLSSNTVDAQEVELIWTILPAIVLILLALPSLQILYMMDEIDEPDLTLKAIGHQWYWSYEYTDFKDLTFDSYMIPTSELPPGHFRLLEVDHRVVVPMESPIRVIITAGDVLHSWAVPTLGVKTDAIPGRLNQTSFITTRPGIFYGQCSEICGANHSYMPIVVESTPLTYFESWSSLLSTDS.

At 1-14 the chain is on the mitochondrial intermembrane side; the sequence is MANPSQFGFQDASS. The chain crosses the membrane as a helical span at residues 15–45; sequence PIMEELVEFHDHALMVALAICSLVLYLLALM. Residues 46 to 58 are Mitochondrial matrix-facing; the sequence is LVEKLSSNTVDAQ. Residues 59–86 traverse the membrane as a helical segment; the sequence is EVELIWTILPAIVLILLALPSLQILYMM. The Mitochondrial intermembrane segment spans residues 87–229; it reads DEIDEPDLTL…SWSSLLSTDS (143 aa). Positions 160, 195, 197, 199, 203, and 206 each coordinate Cu cation. Residue glutamate 197 participates in Mg(2+) binding.

It belongs to the cytochrome c oxidase subunit 2 family. As to quaternary structure, component of the cytochrome c oxidase (complex IV, CIV), a multisubunit enzyme composed of 14 subunits. The complex is composed of a catalytic core of 3 subunits MT-CO1, MT-CO2 and MT-CO3, encoded in the mitochondrial DNA, and 11 supernumerary subunits COX4I, COX5A, COX5B, COX6A, COX6B, COX6C, COX7A, COX7B, COX7C, COX8 and NDUFA4, which are encoded in the nuclear genome. The complex exists as a monomer or a dimer and forms supercomplexes (SCs) in the inner mitochondrial membrane with NADH-ubiquinone oxidoreductase (complex I, CI) and ubiquinol-cytochrome c oxidoreductase (cytochrome b-c1 complex, complex III, CIII), resulting in different assemblies (supercomplex SCI(1)III(2)IV(1) and megacomplex MCI(2)III(2)IV(2)). Found in a complex with TMEM177, COA6, COX18, COX20, SCO1 and SCO2. Interacts with TMEM177 in a COX20-dependent manner. Interacts with COX20. Interacts with COX16. It depends on Cu cation as a cofactor.

Its subcellular location is the mitochondrion inner membrane. It catalyses the reaction 4 Fe(II)-[cytochrome c] + O2 + 8 H(+)(in) = 4 Fe(III)-[cytochrome c] + 2 H2O + 4 H(+)(out). Its function is as follows. Component of the cytochrome c oxidase, the last enzyme in the mitochondrial electron transport chain which drives oxidative phosphorylation. The respiratory chain contains 3 multisubunit complexes succinate dehydrogenase (complex II, CII), ubiquinol-cytochrome c oxidoreductase (cytochrome b-c1 complex, complex III, CIII) and cytochrome c oxidase (complex IV, CIV), that cooperate to transfer electrons derived from NADH and succinate to molecular oxygen, creating an electrochemical gradient over the inner membrane that drives transmembrane transport and the ATP synthase. Cytochrome c oxidase is the component of the respiratory chain that catalyzes the reduction of oxygen to water. Electrons originating from reduced cytochrome c in the intermembrane space (IMS) are transferred via the dinuclear copper A center (CU(A)) of subunit 2 and heme A of subunit 1 to the active site in subunit 1, a binuclear center (BNC) formed by heme A3 and copper B (CU(B)). The BNC reduces molecular oxygen to 2 water molecules using 4 electrons from cytochrome c in the IMS and 4 protons from the mitochondrial matrix. In Struthio camelus (Common ostrich), this protein is Cytochrome c oxidase subunit 2 (MT-CO2).